Reading from the N-terminus, the 389-residue chain is Chalcone synthase 1 (389 aa).

Residue cysteine 164 is part of the active site.

This sequence belongs to the thiolase-like superfamily. Chalcone/stilbene synthases family.

It catalyses the reaction (E)-4-coumaroyl-CoA + 3 malonyl-CoA + 3 H(+) = 2',4,4',6'-tetrahydroxychalcone + 3 CO2 + 4 CoA. Its pathway is secondary metabolite biosynthesis; flavonoid biosynthesis. In terms of biological role, the primary product of this enzyme is 4,2',4',6'-tetrahydroxychalcone (also termed naringenin-chalcone or chalcone) which can under specific conditions spontaneously isomerize into naringenin. This chain is Chalcone synthase 1 (CHS1), found in Pisum sativum (Garden pea).